A 97-amino-acid polypeptide reads, in one-letter code: Acylphosphatase (97 aa).

Positions 11-97 constitute an Acylphosphatase-like domain; that stretch reads TYYVRVRGTV…EKRYERFEQH (87 aa). Residues R26 and N44 contribute to the active site. The interval 76–97 is disordered; it reads RVTEVSGEERSTEKRYERFEQH. Residues 82-97 are compositionally biased toward basic and acidic residues; sequence GEERSTEKRYERFEQH.

It belongs to the acylphosphatase family.

The catalysed reaction is an acyl phosphate + H2O = a carboxylate + phosphate + H(+). This chain is Acylphosphatase (acyP), found in Paraburkholderia xenovorans (strain LB400).